Consider the following 145-residue polypeptide: Small ribosomal subunit protein uS19 (145 aa).

An N-acetylalanine modification is found at A2. A Glycyl lysine isopeptide (Lys-Gly) (interchain with G-Cter in SUMO2) cross-link involves residue K108.

This sequence belongs to the universal ribosomal protein uS19 family. In terms of assembly, component of the small ribosomal subunit.

Its subcellular location is the cytoplasm. In terms of biological role, component of the small ribosomal subunit. The ribosome is a large ribonucleoprotein complex responsible for the synthesis of proteins in the cell. In Bos taurus (Bovine), this protein is Small ribosomal subunit protein uS19 (RPS15).